Here is a 448-residue protein sequence, read N- to C-terminus: tRNA modification GTPase MnmE (448 aa).

Positions 24, 81, and 120 each coordinate (6S)-5-formyl-5,6,7,8-tetrahydrofolate. Residues 216–373 enclose the TrmE-type G domain; it reads GLNVVLVGAP…LKRTLLREAG (158 aa). N226 lines the K(+) pocket. GTP contacts are provided by residues 226–231, 245–251, and 270–273; these read NVGKSS, TDIAGTT, and DTAG. Position 230 (S230) interacts with Mg(2+). The K(+) site is built by T245, I247, and T250. T251 contacts Mg(2+). K448 lines the (6S)-5-formyl-5,6,7,8-tetrahydrofolate pocket.

The protein belongs to the TRAFAC class TrmE-Era-EngA-EngB-Septin-like GTPase superfamily. TrmE GTPase family. Homodimer. Heterotetramer of two MnmE and two MnmG subunits. K(+) is required as a cofactor.

The protein localises to the cytoplasm. Exhibits a very high intrinsic GTPase hydrolysis rate. Involved in the addition of a carboxymethylaminomethyl (cmnm) group at the wobble position (U34) of certain tRNAs, forming tRNA-cmnm(5)s(2)U34. The sequence is that of tRNA modification GTPase MnmE from Neisseria meningitidis serogroup A / serotype 4A (strain DSM 15465 / Z2491).